The primary structure comprises 159 residues: NADH-quinone oxidoreductase subunit I (159 aa).

4Fe-4S ferredoxin-type domains are found at residues 51–80 and 90–119; these read RRYE…IEAD and TRYD…EGPN. The [4Fe-4S] cluster site is built by Cys60, Cys63, Cys66, Cys70, Cys99, Cys102, Cys105, and Cys109.

This sequence belongs to the complex I 23 kDa subunit family. As to quaternary structure, NDH-1 is composed of 14 different subunits. Subunits NuoA, H, J, K, L, M, N constitute the membrane sector of the complex. It depends on [4Fe-4S] cluster as a cofactor.

It is found in the cell inner membrane. The enzyme catalyses a quinone + NADH + 5 H(+)(in) = a quinol + NAD(+) + 4 H(+)(out). NDH-1 shuttles electrons from NADH, via FMN and iron-sulfur (Fe-S) centers, to quinones in the respiratory chain. The immediate electron acceptor for the enzyme in this species is believed to be ubiquinone. Couples the redox reaction to proton translocation (for every two electrons transferred, four hydrogen ions are translocated across the cytoplasmic membrane), and thus conserves the redox energy in a proton gradient. The sequence is that of NADH-quinone oxidoreductase subunit I from Rickettsia rickettsii (strain Sheila Smith).